Consider the following 239-residue polypeptide: Norbelladine 4'-O-methyltransferase (239 aa).

S-adenosyl-L-methionine is bound by residues V55, E77, 79-80 (GV), S85, D103, and A132. Residue D155 participates in a divalent metal cation binding. S-adenosyl-L-methionine is bound at residue D157. 2 residues coordinate a divalent metal cation: D181 and N182.

The protein belongs to the class I-like SAM-binding methyltransferase superfamily. Cation-dependent O-methyltransferase family. It depends on Mg(2+) as a cofactor. Mostly expressed in bulbs, and, to a lower extent, in stems and roots.

The catalysed reaction is norbelladine + S-adenosyl-L-methionine = 4'-O-methylnorbelladine + S-adenosyl-L-homocysteine + H(+). It participates in alkaloid biosynthesis. Functionally, 4'-O-methyltransferase converting norbelladine to 4'-O-methylnorbelladine. 4'-O-methylnorbelladine is a precursor to all Amaryllidaceae alkaloids such as galanthamine, lycorine and haemanthamine, and including haemanthamine- and crinamine-type alkaloids, promising anticancer agents. This chain is Norbelladine 4'-O-methyltransferase, found in Narcissus pseudonarcissus (Daffodil).